The sequence spans 61 residues: Small ribosomal subunit protein uS14 (61 aa).

The Zn(2+) site is built by Cys-24, Cys-27, Cys-40, and Cys-43.

Belongs to the universal ribosomal protein uS14 family. Zinc-binding uS14 subfamily. Part of the 30S ribosomal subunit. Contacts proteins S3 and S10. It depends on Zn(2+) as a cofactor.

Its function is as follows. Binds 16S rRNA, required for the assembly of 30S particles and may also be responsible for determining the conformation of the 16S rRNA at the A site. This Clostridium beijerinckii (strain ATCC 51743 / NCIMB 8052) (Clostridium acetobutylicum) protein is Small ribosomal subunit protein uS14.